The primary structure comprises 450 residues: Tubulin alpha-3C chain (450 aa).

Positions 1 to 4 (MREC) match the MREC motif motif. Gln11 is a GTP binding site. Residue Lys40 is modified to N6-acetyllysine. 7 residues coordinate GTP: Glu71, Ser140, Gly144, Thr145, Thr179, Asn206, and Asn228. Mg(2+) is bound at residue Glu71. The active site involves Glu254. At Tyr282 the chain carries 3'-nitrotyrosine. At Ser439 the chain carries Phosphoserine. Tyr450 is subject to 3'-nitrotyrosine.

The protein belongs to the tubulin family. As to quaternary structure, dimer of alpha and beta chains. A typical microtubule is a hollow water-filled tube with an outer diameter of 25 nm and an inner diameter of 15 nM. Alpha-beta heterodimers associate head-to-tail to form protofilaments running lengthwise along the microtubule wall with the beta-tubulin subunit facing the microtubule plus end conferring a structural polarity. Microtubules usually have 13 protofilaments but different protofilament numbers can be found in some organisms and specialized cells. Mg(2+) is required as a cofactor. Some glutamate residues at the C-terminus are polyglutamylated, resulting in polyglutamate chains on the gamma-carboxyl group. Polyglutamylation plays a key role in microtubule severing by spastin (SPAST). SPAST preferentially recognizes and acts on microtubules decorated with short polyglutamate tails: severing activity by SPAST increases as the number of glutamates per tubulin rises from one to eight, but decreases beyond this glutamylation threshold. Glutamylation is also involved in cilia motility. Post-translationally, some glutamate residues at the C-terminus are monoglycylated but not polyglycylated due to the absence of functional TTLL10 in human. Monoglycylation is mainly limited to tubulin incorporated into cilia and flagella axonemes, which is required for their stability and maintenance. Flagella glycylation controls sperm motility. Both polyglutamylation and monoglycylation can coexist on the same protein on adjacent residues, and lowering glycylation levels increases polyglutamylation, and reciprocally. In terms of processing, acetylation of alpha chains at Lys-40 is located inside the microtubule lumen. This modification has been correlated with increased microtubule stability, intracellular transport and ciliary assembly. Methylation of alpha chains at Lys-40 is found in mitotic microtubules and is required for normal mitosis and cytokinesis contributing to genomic stability. Post-translationally, nitration of Tyr-450 is irreversible and interferes with normal dynein intracellular distribution. In terms of processing, undergoes a tyrosination/detyrosination cycle, the cyclic removal and re-addition of a C-terminal tyrosine residue by the enzymes tubulin tyrosine carboxypeptidase (MATCAP1/KIAA0895L, VASH1 or VASH2) and tubulin tyrosine ligase (TTL), respectively. Tyrosination promotes microtubule interaction with CAP-Gly domain-containing proteins such as CLIP1, CLIP2 and DCTN1. Tyrosination regulates the initiation of dynein-dynactin motility via interaction with DCTN1, which brings the dynein-dynactin complex into contact with microtubules. In neurons, tyrosinated tubulins mediate the initiation of retrograde vesicle transport. Post-translationally, detyrosination is involved in metaphase plate congression by guiding chromosomes during mitosis: detyrosination promotes interaction with CENPE, promoting pole-proximal transport of chromosomes toward the equator. Detyrosination increases microtubules-dependent mechanotransduction in dystrophic cardiac and skeletal muscle. In cardiomyocytes, detyrosinated microtubules are required to resist to contractile compression during contraction: detyrosination promotes association with desmin (DES) at force-generating sarcomeres, leading to buckled microtubules and mechanical resistance to contraction. Expressed in testis.

It is found in the cytoplasm. The protein localises to the cytoskeleton. It carries out the reaction GTP + H2O = GDP + phosphate + H(+). Its function is as follows. Tubulin is the major constituent of microtubules, a cylinder consisting of laterally associated linear protofilaments composed of alpha- and beta-tubulin heterodimers. Microtubules grow by the addition of GTP-tubulin dimers to the microtubule end, where a stabilizing cap forms. Below the cap, tubulin dimers are in GDP-bound state, owing to GTPase activity of alpha-tubulin. In Homo sapiens (Human), this protein is Tubulin alpha-3C chain (TUBA3C).